A 178-amino-acid chain; its full sequence is Nicotinamide-nucleotide adenylyltransferase (178 aa).

Belongs to the archaeal NMN adenylyltransferase family.

It is found in the cytoplasm. It catalyses the reaction beta-nicotinamide D-ribonucleotide + ATP + H(+) = diphosphate + NAD(+). The protein operates within cofactor biosynthesis; NAD(+) biosynthesis; NAD(+) from nicotinamide D-ribonucleotide: step 1/1. This chain is Nicotinamide-nucleotide adenylyltransferase, found in Thermoplasma volcanium (strain ATCC 51530 / DSM 4299 / JCM 9571 / NBRC 15438 / GSS1).